The chain runs to 218 residues: Adenylate kinase (218 aa).

10–15 (GAGKGT) contributes to the ATP binding site. Residues 30–59 (STGDIFREAIAKGTELGRKVQDIVNSGNLV) form an NMP region. AMP is bound by residues T31, R36, 57-59 (NLV), 85-88 (GYPR), and Q92. The tract at residues 126 to 163 (TRRVCSKCGKVYNVITLPSKVEGICDDCGGTLIQRDDD) is LID. ATP is bound at residue R127. Zn(2+) contacts are provided by C130 and C133. 136–137 (VY) contacts ATP. C150 and C153 together coordinate Zn(2+). 2 residues coordinate AMP: R160 and R171. ATP is bound at residue K199.

Belongs to the adenylate kinase family. In terms of assembly, monomer.

The protein resides in the cytoplasm. The enzyme catalyses AMP + ATP = 2 ADP. Its pathway is purine metabolism; AMP biosynthesis via salvage pathway; AMP from ADP: step 1/1. Its function is as follows. Catalyzes the reversible transfer of the terminal phosphate group between ATP and AMP. Plays an important role in cellular energy homeostasis and in adenine nucleotide metabolism. In Fervidobacterium nodosum (strain ATCC 35602 / DSM 5306 / Rt17-B1), this protein is Adenylate kinase.